Consider the following 394-residue polypeptide: MSKAKFERKKPHLNVGTIGHVDHGKTTLTAAISAVLTKAHGGEVKDFASIDNAPEERERGITINTSHIEYDTDTRHYAHVDCPGHADYVKNMITGAAQMDAGILVVAATDGPMPQTREHILLSRQVGVPHLIVFMNKCDMVDDEELLELVEMEVRELLSEYDFPGDDLPVIQGSALKALEGDPVWEAKVMELADALDTYIPLPERDIDKPFILPIEDVFSIAGRGTVVTGRVERGIIKVGQEVEIIGLRPTVKTTCTGVEMFRKLLDEGRAGENVGILLRGTKRDDVERGQVLAKPGSIKPHTKFEGEVYILSKDEGGRHTPFFKGYRPQFFFRTTDITGAVELPEGVEMVMPGDNLKFVVDLIGPVAMDEGLRFAIREGGRTVGAGVVSKIIE.

One can recognise a tr-type G domain in the interval 10–204 (KPHLNVGTIG…ALDTYIPLPE (195 aa)). The interval 19-26 (GHVDHGKT) is G1. 19-26 (GHVDHGKT) lines the GTP pocket. Thr-26 is a binding site for Mg(2+). Residues 60–64 (GITIN) are G2. The tract at residues 81-84 (DCPG) is G3. GTP is bound by residues 81 to 85 (DCPGH) and 136 to 139 (NKCD). The segment at 136 to 139 (NKCD) is G4. The G5 stretch occupies residues 174-176 (SAL).

The protein belongs to the TRAFAC class translation factor GTPase superfamily. Classic translation factor GTPase family. EF-Tu/EF-1A subfamily. Monomer.

It is found in the cytoplasm. It catalyses the reaction GTP + H2O = GDP + phosphate + H(+). GTP hydrolase that promotes the GTP-dependent binding of aminoacyl-tRNA to the A-site of ribosomes during protein biosynthesis. The protein is Elongation factor Tu of Psychromonas ingrahamii (strain DSM 17664 / CCUG 51855 / 37).